Here is an 88-residue protein sequence, read N- to C-terminus: Cytochrome c oxidase subunit 6B2 (88 aa).

Residues 1-22 (MLDVEAQEPPKGKWSTPPFDPR) are disordered. Positions 29–75 (IRNCYQNFLDYHRCLKTRTRRGKSTQPCEYYFRVYHSLCPISWVESW) constitute a CHCH domain. The Cx9C motif motif lies at 32–42 (CYQNFLDYHRC). 2 cysteine pairs are disulfide-bonded: Cys-32-Cys-67 and Cys-42-Cys-56. The Cx10C motif motif lies at 56–67 (CEYYFRVYHSLC).

Belongs to the cytochrome c oxidase subunit 6B family. As to quaternary structure, component of the cytochrome c oxidase (complex IV, CIV), a multisubunit enzyme composed of 14 subunits. The complex is composed of a catalytic core of 3 subunits MT-CO1, MT-CO2 and MT-CO3, encoded in the mitochondrial DNA, and 11 supernumerary subunits COX4I1 (or COX4I2), COX5A, COX5B, COX6A1 (or COX6A2), COX6B1 (or COX6B2), COX6C, COX7A2 (or COX7A1), COX7B, COX7C, COX8A and NDUFA4, which are encoded in the nuclear genome. The complex exists as a monomer or a dimer and forms supercomplexes (SCs) in the inner mitochondrial membrane with NADH-ubiquinone oxidoreductase (complex I, CI) and ubiquinol-cytochrome c oxidoreductase (cytochrome b-c1 complex, complex III, CIII), resulting in different assemblies (supercomplex SCI(1)III(2)IV(1) and megacomplex MCI(2)III(2)IV(2)). Testis specific. Weak expression in thymus and heart. Expressed in cancer cell lines.

Its subcellular location is the mitochondrion inner membrane. Its pathway is energy metabolism; oxidative phosphorylation. Functionally, component of the cytochrome c oxidase, the last enzyme in the mitochondrial electron transport chain which drives oxidative phosphorylation. The respiratory chain contains 3 multisubunit complexes succinate dehydrogenase (complex II, CII), ubiquinol-cytochrome c oxidoreductase (cytochrome b-c1 complex, complex III, CIII) and cytochrome c oxidase (complex IV, CIV), that cooperate to transfer electrons derived from NADH and succinate to molecular oxygen, creating an electrochemical gradient over the inner membrane that drives transmembrane transport and the ATP synthase. Cytochrome c oxidase is the component of the respiratory chain that catalyzes the reduction of oxygen to water. Electrons originating from reduced cytochrome c in the intermembrane space (IMS) are transferred via the dinuclear copper A center (CU(A)) of subunit 2 and heme A of subunit 1 to the active site in subunit 1, a binuclear center (BNC) formed by heme A3 and copper B (CU(B)). The BNC reduces molecular oxygen to 2 water molecules using 4 electrons from cytochrome c in the IMS and 4 protons from the mitochondrial matrix. The protein is Cytochrome c oxidase subunit 6B2 (COX6B2) of Homo sapiens (Human).